We begin with the raw amino-acid sequence, 198 residues long: Carnitine operon protein CaiE (198 aa).

The segment at 179–198 is disordered; sequence VEENRPRLKGTTDVKPKSAQ. Residues 180 to 198 are compositionally biased toward basic and acidic residues; the sequence is EENRPRLKGTTDVKPKSAQ.

It belongs to the transferase hexapeptide repeat family.

Its pathway is amine and polyamine metabolism; carnitine metabolism. Its function is as follows. Overproduction of CaiE stimulates the activity of CaiB and CaiD. This is Carnitine operon protein CaiE from Salmonella enteritidis PT4 (strain P125109).